Here is a 423-residue protein sequence, read N- to C-terminus: D-tagatose-1,6-bisphosphate aldolase subunit GatZ (423 aa).

This sequence belongs to the GatZ/KbaZ family. GatZ subfamily. As to quaternary structure, forms a complex with GatY.

Its pathway is carbohydrate metabolism; D-tagatose 6-phosphate degradation; D-glyceraldehyde 3-phosphate and glycerone phosphate from D-tagatose 6-phosphate: step 2/2. Functionally, component of the tagatose-1,6-bisphosphate aldolase GatYZ that is required for full activity and stability of the Y subunit. Could have a chaperone-like function for the proper and stable folding of GatY. When expressed alone, GatZ does not show any aldolase activity. Is involved in the catabolism of galactitol. This Salmonella dublin (strain CT_02021853) protein is D-tagatose-1,6-bisphosphate aldolase subunit GatZ.